We begin with the raw amino-acid sequence, 33 residues long: Mu/omega-theraphotoxin-Tap2a (33 aa).

Cystine bridges form between Cys2–Cys17, Cys9–Cys22, and Cys16–Cys29.

Belongs to the neurotoxin 10 (Hwtx-1) family. 59 (Tltx) subfamily. As to expression, expressed by the venom gland.

It is found in the secreted. Its function is as follows. Gating-modifier toxin that inhibits both sodium (Nav) and calcium (Cav3) channels by inducing hyperpolarizing shift in voltage-dependence of activation and steady state inactivation. Inhibits Nav1.1/SCN1A, Nav1.2/SCN2A, Nav1.6/SCN6A, Nav1.7/SCN9A and Cav3.1/CACNA1G sodium and calcium channels at nanomolar concentrations (IC(50)=169-621 nM). Surprisingly, selectively slows fast inactivation of Nav1.3/SCN3A. Also shows moderate inhibition of Nav1.3/SCN3A sodium channels (IC(50)=1216 nM). The polypeptide is Mu/omega-theraphotoxin-Tap2a (Theraphosa apophysis (Goliath pinkfoot tarantula)).